The following is a 686-amino-acid chain: ATP-dependent zinc metalloprotease FtsH 1 (686 aa).

Residues 1–33 (MCFCIVSSPEAMHSNADSPSSGPGLQPVWTTLR) lie on the Cytoplasmic side of the membrane. A helical transmembrane segment spans residues 34–54 (SPYVFWIGGAILLALLVHLGI). Topologically, residues 55–164 (KWQQASAPVR…TFAATQESDW (110 aa)) are periplasmic. The helical transmembrane segment at 165–185 (VGTLLLWGLPLGLIVGIWLFF) threads the bilayer. The Cytoplasmic portion of the chain corresponds to 186–686 (MRRMATGGRE…AEGASPSSQG (501 aa)). 257 to 264 (GPPGTGKT) serves as a coordination point for ATP. Zn(2+) is bound at residue His-479. Residue Glu-480 is part of the active site. The Zn(2+) site is built by His-483 and Asp-555. The segment at 661-686 (YAWLKEGDGTSRNSASAEGASPSSQG) is disordered. A compositionally biased stretch (polar residues) spans 670-686 (TSRNSASAEGASPSSQG).

This sequence in the central section; belongs to the AAA ATPase family. The protein in the C-terminal section; belongs to the peptidase M41 family. Homohexamer. Zn(2+) serves as cofactor.

The protein resides in the cell inner membrane. In terms of biological role, acts as a processive, ATP-dependent zinc metallopeptidase for both cytoplasmic and membrane proteins. Plays a role in the quality control of integral membrane proteins. This chain is ATP-dependent zinc metalloprotease FtsH 1, found in Salinibacter ruber (strain M8).